The following is a 468-amino-acid chain: Glutamyl-tRNA reductase (468 aa).

Residues 49–52, serine 109, 114–116, and glutamine 120 contribute to the substrate site; these read TCNR and EQQ. Cysteine 50 (nucleophile) is an active-site residue. 189-194 provides a ligand contact to NADP(+); the sequence is GAGAMG. Residues 443–468 form a disordered region; sequence VPSGFDAESRRGGGDMQSSPKRSPSN. A compositionally biased stretch (polar residues) spans 458 to 468; sequence MQSSPKRSPSN.

This sequence belongs to the glutamyl-tRNA reductase family. Homodimer.

The catalysed reaction is (S)-4-amino-5-oxopentanoate + tRNA(Glu) + NADP(+) = L-glutamyl-tRNA(Glu) + NADPH + H(+). The protein operates within porphyrin-containing compound metabolism; protoporphyrin-IX biosynthesis; 5-aminolevulinate from L-glutamyl-tRNA(Glu): step 1/2. Functionally, catalyzes the NADPH-dependent reduction of glutamyl-tRNA(Glu) to glutamate 1-semialdehyde (GSA). The protein is Glutamyl-tRNA reductase of Mycobacterium tuberculosis (strain ATCC 25177 / H37Ra).